We begin with the raw amino-acid sequence, 451 residues long: Phosphoglucosamine mutase (451 aa).

Ser-102 serves as the catalytic Phosphoserine intermediate. 4 residues coordinate Mg(2+): Ser-102, Asp-242, Asp-244, and Asp-246. Phosphoserine is present on Ser-102.

This sequence belongs to the phosphohexose mutase family. Requires Mg(2+) as cofactor. Activated by phosphorylation.

The catalysed reaction is alpha-D-glucosamine 1-phosphate = D-glucosamine 6-phosphate. Functionally, catalyzes the conversion of glucosamine-6-phosphate to glucosamine-1-phosphate. The sequence is that of Phosphoglucosamine mutase from Staphylococcus aureus (strain USA300).